Reading from the N-terminus, the 312-residue chain is Telomere-binding protein OPG077 (312 aa).

This sequence belongs to the orthopoxvirus OPG077 family.

The protein localises to the virion. Functionally, DNA-binding protein which binds to the hairpin form of the viral telomeric sequence. Required for the production of mature virions (MV). This Rabbitpox virus (strain Utrecht) (RPV) protein is Telomere-binding protein OPG077 (OPG077).